A 1098-amino-acid chain; its full sequence is NACHT, LRR and PYD domains-containing protein 5 (1098 aa).

The 97-residue stretch at 1 to 97 folds into the Pyrin domain; that stretch reads MREAKIAPLS…SEMARDEMKK (97 aa). The tract at residues 104–131 is disordered; sequence SEDSAPTKTDQGPSMKEVPGPREDPQDS. Residues 122–131 are compositionally biased toward basic and acidic residues; it reads PGPREDPQDS. The 324-residue stretch at 180–503 folds into the NACHT domain; that stretch reads LTVVLHGPPG…ALFYVLRGVE (324 aa). 186–193 is a binding site for ATP; the sequence is GPPGVGKS. LRR repeat units lie at residues 851–871, 880–900, 908–928, 937–958, 965–985, 993–1013, and 1021–1041; these read GLTHLSLSGDELGSKGMSLLC, GLQKLALNACSLDVAGCGFLA, HLTHLSLSMNPLEDPGMNLLC, PLRDLDLVNCRLTASCCKSLSN, RLRSLDLAANALGDEGIAALC, TLTRLGLEACGLTSEGCKALS, and HLASLNLMRNDLGPRGMTTLC.

It belongs to the NLRP family. In terms of assembly, component of the subcortical maternal complex (SCMC), at least composed of NLRP5, KHDC3, OOEP, and TLE6. Within the complex, interacts with OOEP, KHDC3 and TLE6. The SCMC may facilitate translocation of its components between the nuclear and cytoplasmic compartments. As part of the SCMC interacts with the SCMC-associated protein ZBED3. As part of the SCMC interacts with the SCMC-associated protein CFL1/Cofilin-1. Interacts with PRKCE. Interacts with TUBB3 at cytoskeleton microtubules. Phosphorylated by PRKCE. In terms of tissue distribution, oocyte-specific.

It is found in the cytoplasm. The protein resides in the cytoplasmic vesicle. It localises to the secretory vesicle. Its subcellular location is the cortical granule. The protein localises to the mitochondrion. It is found in the nucleus. The protein resides in the nucleolus. It localises to the golgi apparatus. Functionally, component of the subcortical maternal complex (SCMC), a multiprotein complex that plays a key role in early embryonic development. The SCMC complex is a structural constituent of cytoplasmic lattices, which consist in fibrous structures found in the cytoplasm of oocytes and preimplantation embryos. They are required to store maternal proteins critical for embryonic development, such as proteins that control epigenetic reprogramming of the preimplantation embryo, and prevent their degradation or activation. Required for the localization of cortical granules to the cortex of oocytes, via association with the cortical actin scaffold. Required for cortical actin clearance prior to oocyte exocytosis and prevention of polyspermy. Involved in regulating post-fertilization Ca(2+) release and endoplasmic reticulum storage (ER) storage via regulation of cellular localization. May be involved in the localization of mitochondria to the cytoplasm and perinuclear region in oocytes and early stage embryos, independent of its role in CPL formation. The sequence is that of NACHT, LRR and PYD domains-containing protein 5 (NLRP5) from Bos taurus (Bovine).